We begin with the raw amino-acid sequence, 30 residues long: Photosystem I reaction center subunit XII (30 aa).

Residues 6-26 traverse the membrane as a helical segment; that stretch reads VFTILAIALVPAVMALLLGSA.

The protein belongs to the PsaM family.

The protein resides in the cellular thylakoid membrane. The polypeptide is Photosystem I reaction center subunit XII (Synechococcus sp. (strain JA-2-3B'a(2-13)) (Cyanobacteria bacterium Yellowstone B-Prime)).